A 145-amino-acid polypeptide reads, in one-letter code: Large ribosomal subunit protein uL15 (145 aa).

Residues 1-52 (MRLNTLSPAAGSKRVKHRPGRGIGSGLGKTGGRGVKGQTSRSGGGKVRNGFE) form a disordered region. Composition is skewed to gly residues over residues 21–35 (RGIG…GRGV) and 42–52 (SGGGKVRNGFE).

The protein belongs to the universal ribosomal protein uL15 family. In terms of assembly, part of the 50S ribosomal subunit.

In terms of biological role, binds to the 23S rRNA. The sequence is that of Large ribosomal subunit protein uL15 from Aeromonas hydrophila subsp. hydrophila (strain ATCC 7966 / DSM 30187 / BCRC 13018 / CCUG 14551 / JCM 1027 / KCTC 2358 / NCIMB 9240 / NCTC 8049).